The sequence spans 391 residues: Curcumin synthase 2 (391 aa).

Residue C166 is part of the active site.

The protein belongs to the thiolase-like superfamily. Chalcone/stilbene synthases family. Homodimer.

It catalyses the reaction (E)-feruloylacetyl-CoA + (E)-feruloyl-CoA + H2O = curcumin + CO2 + 2 CoA. It participates in secondary metabolite biosynthesis; flavonoid biosynthesis. In terms of biological role, catalyzes the synthesis of curcumin by condensing feruloyl-CoA with a diketide-CoA in the curcuminoid biosynthesis. The sequence is that of Curcumin synthase 2 (CURS2) from Curcuma longa (Turmeric).